The sequence spans 631 residues: Dolichyl-diphosphooligosaccharide--protein glycosyltransferase subunit 2 (631 aa).

Residues 1–22 (MAPPGSSTVFLLALTIIASTWA) form the signal peptide. Residues 23–540 (LTPTHYLTKH…REPEKRPPTV (518 aa)) are Lumenal-facing. N-linked (GlcNAc...) asparagine glycosylation occurs at Asn-106. A Glycyl lysine isopeptide (Lys-Gly) (interchain with G-Cter in ubiquitin) cross-link involves residue Lys-154. A helical membrane pass occupies residues 541 to 561 (VSNTFTALILSPLLLLFALWI). Residues 562–571 (RIGANVSNFT) lie on the Cytoplasmic side of the membrane. The chain crosses the membrane as a helical span at residues 572–592 (FAPSTIIFHLGHAAMLGLMYV). The Lumenal portion of the chain corresponds to 593–596 (YWTQ). The chain crosses the membrane as a helical span at residues 597-617 (LNMFQTLKYLAILGSVTFLAG). Residues 618 to 631 (NRMLAQQAVKRTAH) are Cytoplasmic-facing.

The protein belongs to the SWP1 family. In terms of assembly, component of the oligosaccharyltransferase (OST) complex. OST exists in two different complex forms which contain common core subunits RPN1, RPN2, OST48, OST4, DAD1 and TMEM258, either STT3A or STT3B as catalytic subunits, and form-specific accessory subunits. STT3A complex assembly occurs through the formation of 3 subcomplexes. Subcomplex 1 contains RPN1 and TMEM258, subcomplex 2 contains the STT3A-specific subunits STT3A, DC2/OSTC, and KCP2 as well as the core subunit OST4, and subcomplex 3 contains RPN2, DAD1, and OST48. The STT3A complex can form stable complexes with the Sec61 complex or with both the Sec61 and TRAP complexes. Interacts with DDI2. Interacts with TMEM35A/NACHO. Expressed in all tissues tested.

Its subcellular location is the endoplasmic reticulum. It is found in the endoplasmic reticulum membrane. The protein operates within protein modification; protein glycosylation. In terms of biological role, subunit of the oligosaccharyl transferase (OST) complex that catalyzes the initial transfer of a defined glycan (Glc(3)Man(9)GlcNAc(2) in eukaryotes) from the lipid carrier dolichol-pyrophosphate to an asparagine residue within an Asn-X-Ser/Thr consensus motif in nascent polypeptide chains, the first step in protein N-glycosylation. N-glycosylation occurs cotranslationally and the complex associates with the Sec61 complex at the channel-forming translocon complex that mediates protein translocation across the endoplasmic reticulum (ER). All subunits are required for a maximal enzyme activity. The protein is Dolichyl-diphosphooligosaccharide--protein glycosyltransferase subunit 2 of Homo sapiens (Human).